The primary structure comprises 470 residues: Small ribosomal subunit protein bS1m (470 aa).

The tract at residues 436–470 (FKKIPMTAARLRGRYENSDSPSSPTMSGSSGYGLR) is disordered. Residues 453-464 (SDSPSSPTMSGS) are compositionally biased toward low complexity.

It belongs to the bacterial ribosomal protein bS1 family. As to quaternary structure, component of the mitochondrial small ribosomal subunit (mt-SSU). Mature N.crassa 74S mitochondrial ribosomes consist of a small (37S) and a large (54S) subunit. The 37S small subunit contains a 16S ribosomal RNA (16S mt-rRNA) and 32 different proteins. The 54S large subunit contains a 23S rRNA (23S mt-rRNA) and 42 different proteins.

It localises to the mitochondrion. In terms of biological role, component of the mitochondrial ribosome (mitoribosome), a dedicated translation machinery responsible for the synthesis of mitochondrial genome-encoded proteins, including at least some of the essential transmembrane subunits of the mitochondrial respiratory chain. The mitoribosomes are attached to the mitochondrial inner membrane and translation products are cotranslationally integrated into the membrane. The protein is Small ribosomal subunit protein bS1m (mrp51) of Neurospora crassa (strain ATCC 24698 / 74-OR23-1A / CBS 708.71 / DSM 1257 / FGSC 987).